The primary structure comprises 788 residues: Endonuclease MutS2 (788 aa).

332-339 serves as a coordination point for ATP; the sequence is GPNTGGKT. Positions 713–788 constitute a Smr domain; it reads VDLRGMDAEE…GTGVTVVELK (76 aa).

It belongs to the DNA mismatch repair MutS family. MutS2 subfamily. In terms of assembly, homodimer. Binds to stalled ribosomes, contacting rRNA.

Endonuclease that is involved in the suppression of homologous recombination and thus may have a key role in the control of bacterial genetic diversity. Functionally, acts as a ribosome collision sensor, splitting the ribosome into its 2 subunits. Detects stalled/collided 70S ribosomes which it binds and splits by an ATP-hydrolysis driven conformational change. Acts upstream of the ribosome quality control system (RQC), a ribosome-associated complex that mediates the extraction of incompletely synthesized nascent chains from stalled ribosomes and their subsequent degradation. Probably generates substrates for RQC. The chain is Endonuclease MutS2 from Clostridium botulinum (strain ATCC 19397 / Type A).